Reading from the N-terminus, the 449-residue chain is Bifunctional protein GlmU (449 aa).

A pyrophosphorylase region spans residues 1–226 (MVIVAVLAAG…YEEILGVNDR (226 aa)). UDP-N-acetyl-alpha-D-glucosamine-binding positions include 7–10 (LAAG), Lys21, Gln73, and 78–79 (GT). Asp103 provides a ligand contact to Mg(2+). Residues Gly140, Glu155, Asn170, and Asn224 each coordinate UDP-N-acetyl-alpha-D-glucosamine. Asn224 is a binding site for Mg(2+). The segment at 227–247 (VQLAAAYQVLQNRIKKAWMQA) is linker. Positions 248 to 449 (GVTLIDPASI…VVKPNWEPEA (202 aa)) are N-acetyltransferase. 2 residues coordinate UDP-N-acetyl-alpha-D-glucosamine: Arg329 and Lys347. His359 functions as the Proton acceptor in the catalytic mechanism. Residues Tyr362 and Asn373 each contribute to the UDP-N-acetyl-alpha-D-glucosamine site. Acetyl-CoA-binding positions include Ala376, 382-383 (NY), Ala419, and Arg436.

This sequence in the N-terminal section; belongs to the N-acetylglucosamine-1-phosphate uridyltransferase family. In the C-terminal section; belongs to the transferase hexapeptide repeat family. Homotrimer. The cofactor is Mg(2+).

The protein resides in the cytoplasm. It carries out the reaction alpha-D-glucosamine 1-phosphate + acetyl-CoA = N-acetyl-alpha-D-glucosamine 1-phosphate + CoA + H(+). It catalyses the reaction N-acetyl-alpha-D-glucosamine 1-phosphate + UTP + H(+) = UDP-N-acetyl-alpha-D-glucosamine + diphosphate. It participates in nucleotide-sugar biosynthesis; UDP-N-acetyl-alpha-D-glucosamine biosynthesis; N-acetyl-alpha-D-glucosamine 1-phosphate from alpha-D-glucosamine 6-phosphate (route II): step 2/2. The protein operates within nucleotide-sugar biosynthesis; UDP-N-acetyl-alpha-D-glucosamine biosynthesis; UDP-N-acetyl-alpha-D-glucosamine from N-acetyl-alpha-D-glucosamine 1-phosphate: step 1/1. Its pathway is bacterial outer membrane biogenesis; LPS lipid A biosynthesis. Catalyzes the last two sequential reactions in the de novo biosynthetic pathway for UDP-N-acetylglucosamine (UDP-GlcNAc). The C-terminal domain catalyzes the transfer of acetyl group from acetyl coenzyme A to glucosamine-1-phosphate (GlcN-1-P) to produce N-acetylglucosamine-1-phosphate (GlcNAc-1-P), which is converted into UDP-GlcNAc by the transfer of uridine 5-monophosphate (from uridine 5-triphosphate), a reaction catalyzed by the N-terminal domain. This chain is Bifunctional protein GlmU, found in Thermosynechococcus vestitus (strain NIES-2133 / IAM M-273 / BP-1).